Here is a 501-residue protein sequence, read N- to C-terminus: ATP synthase subunit beta (501 aa).

Glycine 153–threonine 160 is an ATP binding site.

The protein belongs to the ATPase alpha/beta chains family. In terms of assembly, F-type ATPases have 2 components, CF(1) - the catalytic core - and CF(0) - the membrane proton channel. CF(1) has five subunits: alpha(3), beta(3), gamma(1), delta(1), epsilon(1). CF(0) has three main subunits: a(1), b(2) and c(9-12). The alpha and beta chains form an alternating ring which encloses part of the gamma chain. CF(1) is attached to CF(0) by a central stalk formed by the gamma and epsilon chains, while a peripheral stalk is formed by the delta and b chains.

Its subcellular location is the cell inner membrane. It carries out the reaction ATP + H2O + 4 H(+)(in) = ADP + phosphate + 5 H(+)(out). Produces ATP from ADP in the presence of a proton gradient across the membrane. The catalytic sites are hosted primarily by the beta subunits. The sequence is that of ATP synthase subunit beta from Cytophaga hutchinsonii (strain ATCC 33406 / DSM 1761 / CIP 103989 / NBRC 15051 / NCIMB 9469 / D465).